The following is a 501-amino-acid chain: MDLKDYVRIFDTTLRDGEQCPGAAMTENEKLEIASQLATMKVDIIEAGFPVSSPVQFQAVERIARETEGPMIAALARAMKADIEAASKALQPAKKRRIHTFIASSPIHMKYKLGKEPKEVLKMAVEAVTLCRQFVDDVEFSPEDATRSEPEFLRELCEAVIAAGATTINIPDTVGYTTPAEYGGLFKFLLSNVRGAEKIIFSAHCHNDLGLATANSLAAVQNGARQIECTINGIGERAGNTAMEEVVMAMRTRKDTFGIQTQIKTEEIARASYLVKTITGMLVQPNKAIVGANAFAHESGIHQDGVIKHRETYEIMKPETVGLSSNRMVLGRHSGRAGFKDRIVKLGFSPQVEELEAAYQRFLEIADRKKEIYDEDIRALFSEEARKSTGDRFQLEGFTVSTGTKSTPTAGVRILIDGHVREESATGDGPVDAIYKAIQKTTGMDPEVSRLVISPVTEGQDAMAEASVTLEYKGDRVVGKGSSTDIIEACSRAYISALNRL.

The 263-residue stretch at 7–269 (VRIFDTTLRD…QTQIKTEEIA (263 aa)) folds into the Pyruvate carboxyltransferase domain. Positions 16, 204, 206, and 240 each coordinate Mn(2+). A regulatory domain region spans residues 394–501 (QLEGFTVSTG…RAYISALNRL (108 aa)).

The protein belongs to the alpha-IPM synthase/homocitrate synthase family. LeuA type 1 subfamily. Homodimer. Requires Mn(2+) as cofactor.

It is found in the cytoplasm. The catalysed reaction is 3-methyl-2-oxobutanoate + acetyl-CoA + H2O = (2S)-2-isopropylmalate + CoA + H(+). It participates in amino-acid biosynthesis; L-leucine biosynthesis; L-leucine from 3-methyl-2-oxobutanoate: step 1/4. In terms of biological role, catalyzes the condensation of the acetyl group of acetyl-CoA with 3-methyl-2-oxobutanoate (2-ketoisovalerate) to form 3-carboxy-3-hydroxy-4-methylpentanoate (2-isopropylmalate). The polypeptide is 2-isopropylmalate synthase (Leptospira interrogans serogroup Icterohaemorrhagiae serovar copenhageni (strain Fiocruz L1-130)).